A 392-amino-acid polypeptide reads, in one-letter code: Protein FAM53C (392 aa).

Met-1 carries the N-acetylmethionine modification. The tract at residues 78-119 is disordered; that stretch reads LRPPSRGNSPKEQPFSQVLRPEPPDPEKLPVPPAPPSKRHCR. Polar residues predominate over residues 83–93; it reads RGNSPKEQPFS. Residues Ser-122, Ser-162, Ser-232, Ser-234, Ser-255, and Ser-273 each carry the phosphoserine modification. 2 disordered regions span residues 141–167 and 204–294; these read LWTP…PKRV and RPCA…EDPR. Residues 241–256 are compositionally biased toward low complexity; the sequence is ASRFLPSARSSPASSP. Residues 278 to 294 are compositionally biased toward basic and acidic residues; it reads LDARKTGVKRRHEEDPR. Ser-299 is subject to Phosphoserine. The disordered stretch occupies residues 341–364; sequence ASCSPTGGSSQVLSESEEEEEGAV.

It belongs to the FAM53 family.

The polypeptide is Protein FAM53C (Homo sapiens (Human)).